We begin with the raw amino-acid sequence, 622 residues long: Sodium-coupled monocarboxylate transporter 1 (622 aa).

Residues 1 to 15 are Extracellular-facing; the sequence is MVTPGNIGSFTVWDY. A helical transmembrane segment spans residues 16-36; the sequence is LVFALMLLISAVIGIYYAFAG. At 37–51 the chain is on the cytoplasmic side; that stretch reads GGQKTSKDFLMGGRS. A helical transmembrane segment spans residues 52–72; it reads MTAVPVALSLTASFMSAVTVL. Residues 73–83 lie on the Extracellular side of the membrane; it reads GTPAEVYRFGA. The chain crosses the membrane as a helical span at residues 84 to 104; the sequence is MFIIFAFSYTIVVIISSEVFL. Residues 105 to 128 lie on the Cytoplasmic side of the membrane; that stretch reads PVFYRLGITSTYEYLELRFNKFVR. The chain crosses the membrane as a helical span at residues 129–149; it reads LLGTILFIIQTVLYTGIVIYA. Over 150-161 the chain is Extracellular; the sequence is PALALNQVTGFD. The chain crosses the membrane as a helical span at residues 162 to 182; the sequence is LWGAVVATGVVCTFYCTMGGL. Topologically, residues 183-184 are cytoplasmic; that stretch reads KA. Residues 185-205 form a helical membrane-spanning segment; it reads VVWTDVFQVGIMVAGFTSVII. The Extracellular portion of the chain corresponds to 206-241; that stretch reads RAVVVQGGIGPILNDSYYGDRLNFWDFDPNPLKRHT. Asn-219 is a glycosylation site (N-linked (GlcNAc...) asparagine). A helical transmembrane segment spans residues 242-262; it reads FWTIVVGGTFTWTGIYGVNQA. Residues 263-283 lie on the Cytoplasmic side of the membrane; the sequence is QVQRYIACKTRFQAKMSLYVN. A helical transmembrane segment spans residues 284 to 304; the sequence is LIGLWAILACAVLSGLAMYSI. The Extracellular portion of the chain corresponds to 305–336; sequence YKDCDPWTAKFVSAPDQLMPYLALDILRDYPG. Residues 337–357 form a helical membrane-spanning segment; it reads LPGLFVSCAYSGTLSTVSSSI. The Cytoplasmic segment spans residues 358-389; that stretch reads NALAAVTVEDLIKPYIRSLSEKKMSWISKGTS. A helical transmembrane segment spans residues 390–410; the sequence is LLYGAICIGMAGIASLMGGLL. Residues 411–415 are Extracellular-facing; the sequence is QAALS. The helical transmembrane segment at 416–436 threads the bilayer; the sequence is IFGMVGGPLLGLFSLGILFPF. Over 437–438 the chain is Cytoplasmic; it reads VN. The helical transmembrane segment at 439–459 threads the bilayer; it reads SLGAVIGLLSGFAISLWVGIG. Over 460–521 the chain is Extracellular; it reads SQIYAPSPSS…LADSWYSLSY (62 aa). Residues Asn-481 and Asn-488 are each glycosylated (N-linked (GlcNAc...) asparagine). The helical transmembrane segment at 522–542 threads the bilayer; that stretch reads LYFSTIGTIVAVLVGVIVSLL. Residues 543 to 622 are Cytoplasmic-facing; it reads SGGLKQNVNR…KGEKTNGITA (80 aa). The tract at residues 591-622 is disordered; the sequence is DNDMEQGTDNPAFNNMEMTSTEKGEKTNGITA. Residues 595–609 show a composition bias toward polar residues; sequence EQGTDNPAFNNMEMT.

This sequence belongs to the sodium:solute symporter (SSF) (TC 2.A.21) family. As to expression, in the gastrula and neurula stages, expressed in the gastrula anterior endoderm and in the entire circumference of the blastopore lip superficial endoderm. At tailbud stages, abundant expression observed in the ventral midgut region. As development proceeds expression becomes restricted to the liver diverticulum and ultimately to the presumptive gallbladder, by tadpole stage 35. Also present in pronephros and the tip of the tail.

Its subcellular location is the apical cell membrane. It catalyses the reaction (S)-lactate(out) + 2 Na(+)(out) = (S)-lactate(in) + 2 Na(+)(in). The enzyme catalyses propanoate(out) + 2 Na(+)(out) = propanoate(in) + 2 Na(+)(in). It carries out the reaction pyruvate(out) + 2 Na(+)(out) = pyruvate(in) + 2 Na(+)(in). The catalysed reaction is acetate(out) + 2 Na(+)(out) = acetate(in) + 2 Na(+)(in). It catalyses the reaction butanoate(out) + 2 Na(+)(out) = butanoate(in) + 2 Na(+)(in). The enzyme catalyses nicotinate(out) + 2 Na(+)(out) = nicotinate(in) + 2 Na(+)(in). It carries out the reaction (R)-3-hydroxybutanoate(out) + 2 Na(+)(out) = (R)-3-hydroxybutanoate(in) + 2 Na(+)(in). The catalysed reaction is acetoacetate(out) + 2 Na(+)(out) = acetoacetate(in) + 2 Na(+)(in). It catalyses the reaction 4-methyl-2-oxopentanoate(out) + 2 Na(+)(out) = 4-methyl-2-oxopentanoate(in) + 2 Na(+)(in). The enzyme catalyses 5-oxo-L-proline(out) + 2 Na(+)(out) = 5-oxo-L-proline(in) + 2 Na(+)(in). It carries out the reaction iodide(out) = iodide(in). The catalysed reaction is chloride(in) = chloride(out). It catalyses the reaction nitrate(in) = nitrate(out). The enzyme catalyses bromide(in) = bromide(out). Acts as an electrogenic sodium (Na(+)) and chloride (Cl-)-dependent sodium-coupled solute transporter, including transport of monocarboxylates (short-chain fatty acids including L-lactate, D-lactate, pyruvate, acetate, propionate, valerate and butyrate), mocarboxylate drugs (nicotinate, benzoate, salicylate and 5-aminosalicylate) and ketone bodies (beta-D-hydroxybutyrate, acetoacetate and alpha-ketoisocaproate), with a Na(+):substrate stoichiometry of between 4:1 and 2:1. Catalyzes passive carrier mediated diffusion of iodide. Mediates iodide transport from the thyrocyte into the colloid lumen through the apical membrane. Mediates sodium-coupled electrogenic transport of pyroglutamate (5-oxo-L-proline). Can mediate the transport of chloride, bromide, iodide and nitrate ions when external concentration of sodium ions is reduced. This chain is Sodium-coupled monocarboxylate transporter 1, found in Xenopus laevis (African clawed frog).